The following is a 309-amino-acid chain: MLSSSFERNLHQPLLFIDKDTRVVIQGIGNQGQYHSRLMREYGTKVVGAVHPKKAGKIIAGLPIFKNMKEVVKRTDANASLIFVPAPGAAAACIEAAEAGMGLVVCITEHIPQHDMIKVKKVMKETGCQLIGPNCPGLIQPGTHTKLGIIPTNIFRNGKIGIVSRSGTLTYEAAYATTQAGLGQSTVVGIGGDPFAGQLHTDVIKRFAADPQTEGIILIGEIGGTSEEDAAEWIAKTKLTQEKPVVAFIAGATAPPGKRMGHAGAIVSGGKGTAEGKYKALEAAGVRIARHPGNMGKFIFEEMKRLGKI.

A hydrogenosome-targeting transit peptide spans 1–9; that stretch reads MLSSSFERN. CoA contacts are provided by residues Lys-54 and 107 to 109; that span reads ITE. Tyr-171 is a binding site for substrate. Residue His-262 is the Tele-phosphohistidine intermediate of the active site.

The protein belongs to the succinate/malate CoA ligase alpha subunit family. In terms of assembly, heterodimer of an alpha and a beta subunit.

The protein localises to the hydrogenosome lumen. The enzyme catalyses succinate + ATP + CoA = succinyl-CoA + ADP + phosphate. It functions in the pathway carbohydrate metabolism; tricarboxylic acid cycle; succinate from succinyl-CoA (ligase route): step 1/1. Its function is as follows. Succinyl-CoA synthetase functions in the citric acid cycle (TCA), coupling the hydrolysis of succinyl-CoA to the synthesis of ATP and thus represents the only step of substrate-level phosphorylation in the TCA. The alpha subunit of the enzyme binds the substrates coenzyme A and phosphate, while succinate binding and nucleotide specificity is provided by the beta subunit. This Trichomonas vaginalis protein is Succinate--CoA ligase [ADP-forming] subunit alpha-2, mitochondrial (ALPHA-SCS2).